Consider the following 510-residue polypeptide: Proline--tRNA ligase 2 (510 aa).

Belongs to the class-II aminoacyl-tRNA synthetase family. ProS type 3 subfamily. Homodimer.

It localises to the cytoplasm. The enzyme catalyses tRNA(Pro) + L-proline + ATP = L-prolyl-tRNA(Pro) + AMP + diphosphate. Its function is as follows. Catalyzes the attachment of proline to tRNA(Pro) in a two-step reaction: proline is first activated by ATP to form Pro-AMP and then transferred to the acceptor end of tRNA(Pro). The sequence is that of Proline--tRNA ligase 2 from Anaeromyxobacter dehalogenans (strain 2CP-C).